We begin with the raw amino-acid sequence, 159 residues long: Endoribonuclease YbeY (159 aa).

3 residues coordinate Zn(2+): His-125, His-129, and His-135.

This sequence belongs to the endoribonuclease YbeY family. Requires Zn(2+) as cofactor.

Its subcellular location is the cytoplasm. Single strand-specific metallo-endoribonuclease involved in late-stage 70S ribosome quality control and in maturation of the 3' terminus of the 16S rRNA. The polypeptide is Endoribonuclease YbeY (Ligilactobacillus salivarius (strain UCC118) (Lactobacillus salivarius)).